The sequence spans 487 residues: Iron-sulfur cluster assembly SufBD family protein ycf24 (487 aa).

It belongs to the iron-sulfur cluster assembly SufBD family.

The protein resides in the plastid. The protein localises to the chloroplast. This is Iron-sulfur cluster assembly SufBD family protein ycf24 (ycf24) from Porphyra purpurea (Red seaweed).